A 131-amino-acid chain; its full sequence is Colicin-N immunity protein (131 aa).

2 helical membrane passes run 66–84 (ILTPFTILYISMIYCFLLT) and 104–124 (VFVFFLYNTIYWDIYIHIFVL).

It localises to the cell membrane. The chain is Colicin-N immunity protein (cni) from Escherichia coli.